The chain runs to 855 residues: DNA mismatch repair protein MutS (855 aa).

Gly-616 to Ser-623 contacts ATP.

The protein belongs to the DNA mismatch repair MutS family.

Functionally, this protein is involved in the repair of mismatches in DNA. It is possible that it carries out the mismatch recognition step. This protein has a weak ATPase activity. In Salmonella schwarzengrund (strain CVM19633), this protein is DNA mismatch repair protein MutS.